We begin with the raw amino-acid sequence, 340 residues long: uncharacterized protein (340 aa).

An RING-CH-type zinc finger spans residues 6–70 (KYEKSSARCW…PQCLTAYRIA (65 aa)). 8 residues coordinate Zn(2+): cysteine 14, cysteine 17, cysteine 37, cysteine 39, histidine 44, cysteine 47, cysteine 60, and cysteine 63. The next 3 membrane-spanning stretches (helical) occupy residues 249-269 (EFWI…TKIL), 274-294 (PILL…GNFT), and 300-320 (IIGA…FIAW).

Its subcellular location is the membrane. This is an uncharacterized protein from Schizosaccharomyces pombe (strain 972 / ATCC 24843) (Fission yeast).